Here is a 359-residue protein sequence, read N- to C-terminus: Phosphate acyltransferase (359 aa).

It belongs to the PlsX family. As to quaternary structure, homodimer. Probably interacts with PlsY.

The protein localises to the cytoplasm. The enzyme catalyses a fatty acyl-[ACP] + phosphate = an acyl phosphate + holo-[ACP]. The protein operates within lipid metabolism; phospholipid metabolism. In terms of biological role, catalyzes the reversible formation of acyl-phosphate (acyl-PO(4)) from acyl-[acyl-carrier-protein] (acyl-ACP). This enzyme utilizes acyl-ACP as fatty acyl donor, but not acyl-CoA. The sequence is that of Phosphate acyltransferase from Salmonella agona (strain SL483).